A 72-amino-acid chain; its full sequence is UPF0154 protein Bcer98_2334 (72 aa).

Residues 3 to 23 (IWSGILVGVVALLAGVALGFF) traverse the membrane as a helical segment.

Belongs to the UPF0154 family.

The protein localises to the cell membrane. The chain is UPF0154 protein Bcer98_2334 from Bacillus cytotoxicus (strain DSM 22905 / CIP 110041 / 391-98 / NVH 391-98).